Reading from the N-terminus, the 215-residue chain is Floral homeotic protein GLOBOSA (215 aa).

Positions 3–57 constitute an MADS-box domain; it reads RGKIEIKRIENSSNRQVTYSKRRNGIMKKAKEISVLCDAHVSVIIFASSGKMHEF. Residues 84 to 170 form the K-box domain; that stretch reads HEHLDNEINR…QFKLRQMHLD (87 aa).

It localises to the nucleus. In terms of biological role, transcription factor involved in the genetic control of flower development. Acts in conjunction with DEFICIENS (defA). In Antirrhinum majus (Garden snapdragon), this protein is Floral homeotic protein GLOBOSA (GLO).